The following is a 266-amino-acid chain: Ribosomal RNA small subunit methyltransferase A (266 aa).

6 residues coordinate S-adenosyl-L-methionine: N10, I12, G37, E58, D82, and N105.

Belongs to the class I-like SAM-binding methyltransferase superfamily. rRNA adenine N(6)-methyltransferase family. RsmA subfamily.

The protein localises to the cytoplasm. The catalysed reaction is adenosine(1518)/adenosine(1519) in 16S rRNA + 4 S-adenosyl-L-methionine = N(6)-dimethyladenosine(1518)/N(6)-dimethyladenosine(1519) in 16S rRNA + 4 S-adenosyl-L-homocysteine + 4 H(+). In terms of biological role, specifically dimethylates two adjacent adenosines (A1518 and A1519) in the loop of a conserved hairpin near the 3'-end of 16S rRNA in the 30S particle. May play a critical role in biogenesis of 30S subunits. This is Ribosomal RNA small subunit methyltransferase A from Mycoplasma capricolum subsp. capricolum (strain California kid / ATCC 27343 / NCTC 10154).